A 589-amino-acid chain; its full sequence is Protein drl-1 (589 aa).

The disordered stretch occupies residues 1-51 (MHSEEKYLHIPNNTKYPEIIVEEEEEDPSEEERSELSETDDVATPLRPSDT). The segment covering 20–41 (IVEEEEEDPSEEERSELSETDD) has biased composition (acidic residues). Residues 97–373 (WRINEDVMKD…QNLLESHGSK (277 aa)) enclose the Protein kinase domain. A run of 3 helical transmembrane segments spans residues 429–449 (GFIPFIRWYMSRILIFSVLLV), 456–476 (LCAALSLAAVAGGVFFAIFLI), and 491–511 (GFVVLIALILLPIIILLTTLC).

The protein belongs to the protein kinase superfamily. STE Ser/Thr protein kinase family. As to expression, expressed in vulval and body wall muscles, hypodermis, seam cells and tissues next to pharynx and anus.

It localises to the membrane. Negatively regulates lifespan and health span probably by participating in nutrient sensing. In Caenorhabditis elegans, this protein is Protein drl-1.